Here is a 773-residue protein sequence, read N- to C-terminus: Carnitine O-palmitoyltransferase 1, liver isoform (773 aa).

Ala-2 carries the N-acetylalanine modification. The Cytoplasmic segment spans residues 2-47; the sequence is AEAHQAVAFQFTVTPDGIDLRLSHEALRQIYLSGLHSWKKKFIRFK. A helical transmembrane segment spans residues 48 to 73; the sequence is NGIITGVYPASPSSWLIVVVGVMTTM. Residues 74 to 102 are Mitochondrial intermembrane-facing; sequence YAKIDPSLGIIAKINRTLETANCMSSQTK. A helical transmembrane segment spans residues 103–122; sequence NVVSGVLFGTGLWVALIVTM. Topologically, residues 123–773 are cytoplasmic; the sequence is RYSLKVLLSY…LFGLSSNSKK (651 aa). Tyr-282 bears the 3'-nitrotyrosine mark. Residue His-473 is the Proton acceptor of the active site. Position 555–567 (555–567) interacts with CoA; sequence GKGIIKKCRTSPD. Residue Thr-588 is modified to Phosphothreonine. Position 589 is a 3'-nitrotyrosine (Tyr-589). Tyr-589 and Thr-602 together coordinate (R)-carnitine. Residue Thr-604 is modified to Phosphothreonine. 2 positions are modified to phosphoserine: Ser-741 and Ser-747.

It belongs to the carnitine/choline acetyltransferase family. Homohexamer and homotrimer. Identified in a complex that contains at least CPT1A, ACSL1 and VDAC1. Also identified in complexes with ACSL1 and VDAC2 and VDAC3. Interacts with ZDHHC4. In terms of tissue distribution, strong expression in kidney and heart, and lower in liver and skeletal muscle.

It localises to the mitochondrion outer membrane. It carries out the reaction (R)-carnitine + hexadecanoyl-CoA = O-hexadecanoyl-(R)-carnitine + CoA. The enzyme catalyses succinyl-CoA + L-lysyl-[protein] = N(6)-succinyl-L-lysyl-[protein] + CoA + H(+). The protein operates within lipid metabolism; fatty acid beta-oxidation. With respect to regulation, inhibited by malonyl-CoA. Catalyzes the transfer of the acyl group of long-chain fatty acid-CoA conjugates onto carnitine, an essential step for the mitochondrial uptake of long-chain fatty acids and their subsequent beta-oxidation in the mitochondrion. Also possesses a lysine succinyltransferase activity that can regulate enzymatic activity of substrate proteins such as ENO1 and metabolism independent of its classical carnitine O-palmitoyltransferase activity. Plays an important role in hepatic triglyceride metabolism. Also plays a role in inducible regulatory T-cell (iTreg) differentiation once activated by butyryl-CoA that antagonizes malonyl-CoA-mediated CPT1A repression. Sustains the IFN-I response by recruiting ZDHCC4 to palmitoylate MAVS at the mitochondria leading to MAVS stabilization and activation. Promotes ROS-induced oxidative stress in liver injury via modulation of NFE2L2 and NLRP3-mediated signaling pathways. The polypeptide is Carnitine O-palmitoyltransferase 1, liver isoform (Homo sapiens (Human)).